Here is a 360-residue protein sequence, read N- to C-terminus: MKKFFALALVAPLLISCSSSTKKGDTYNEAWVKDTNGFDILMGQFAHNIENLWGFKEVLIAGPKDYVKYTDQYQTRSHINFDDGTITVETIAGTEPAAHLRRAIIKTLLMGDDPGSVDLYSDVDDIQISREPFLYGQVVDNTGQPIRWEGRATNFADYLLKTRLKSRSNGLRIIYSVTINLVPNHLDKRAHKYVGMVRQAARKYGVDESLILAIMQTESSFNPYAVSRSDALGLMQVVQHTAGKDVFRSQGKSGTPGRSFLFDPASNIDTGTAYLAMLNNVYLGGIDNPTSRRYAVITAYNGGAGSVLRVFSNDKVQAANIINSMSPGDVYQTLTTRHPSAESRRYLYKVNATQKSYRRK.

A signal peptide spans methionine 1–serine 16. A lipid anchor (N-palmitoyl cysteine) is attached at cysteine 17. The S-diacylglycerol cysteine moiety is linked to residue cysteine 17.

Belongs to the transglycosylase Slt family.

The protein localises to the cell outer membrane. It catalyses the reaction Exolytic cleavage of the (1-&gt;4)-beta-glycosidic linkage between N-acetylmuramic acid (MurNAc) and N-acetylglucosamine (GlcNAc) residues in peptidoglycan, from either the reducing or the non-reducing ends of the peptidoglycan chains, with concomitant formation of a 1,6-anhydrobond in the MurNAc residue.. Murein-degrading enzyme. May play a role in recycling of muropeptides during cell elongation and/or cell division. The sequence is that of Membrane-bound lytic murein transglycosylase C from Citrobacter koseri (strain ATCC BAA-895 / CDC 4225-83 / SGSC4696).